A 220-amino-acid polypeptide reads, in one-letter code: Urease accessory protein UreF (220 aa).

It belongs to the UreF family. UreD, UreF and UreG form a complex that acts as a GTP-hydrolysis-dependent molecular chaperone, activating the urease apoprotein by helping to assemble the nickel containing metallocenter of UreC. The UreE protein probably delivers the nickel.

It is found in the cytoplasm. In terms of biological role, required for maturation of urease via the functional incorporation of the urease nickel metallocenter. The protein is Urease accessory protein UreF of Jannaschia sp. (strain CCS1).